Consider the following 335-residue polypeptide: 2-acylglycerol O-acyltransferase 1 (335 aa).

2 helical membrane passes run 24–44 (WVFS…CLVL) and 47–67 (VWLL…TPQA). 2 N-linked (GlcNAc...) asparagine glycosylation sites follow: Asn125 and Asn180.

It belongs to the diacylglycerol acyltransferase family.

It localises to the endoplasmic reticulum membrane. It catalyses the reaction a 2-acylglycerol + an acyl-CoA = a 1,2-diacylglycerol + CoA. It carries out the reaction a 2-acylglycerol + an acyl-CoA = a 1,2-diacyl-sn-glycerol + CoA. The enzyme catalyses a 2-acylglycerol + an acyl-CoA = a 2,3-diacyl-sn-glycerol + CoA. The catalysed reaction is a 1-acylglycerol + an acyl-CoA = a 1,2-diacylglycerol + CoA. It catalyses the reaction a 1-acylglycerol + an acyl-CoA = a 1,3-diacylglycerol + CoA. It carries out the reaction a 1-acyl-sn-glycerol + an acyl-CoA = a 1,3-diacyl-sn-glycerol + CoA. The enzyme catalyses a 3-acyl-sn-glycerol + an acyl-CoA = a 1,3-diacyl-sn-glycerol + CoA. It functions in the pathway glycerolipid metabolism; triacylglycerol biosynthesis. In terms of biological role, involved in glycerolipid synthesis and lipid metabolism. Catalyzes the formation of diacylglycerol, the precursor of triacylglycerol, by transferring the acyl chain of a fatty acyl-CoA to a monoacylglycerol, mainly at the sn-1 or sn-3 positions. It uses both sn-2-monoacylglycerol (2-acylglycerol) and sn-1-monoacylglycerol (1-acyl-sn-glycerol) equally well as substrates, and uses sn-3-monoacylglycerol (3-acyl-sn-glycerol) with lower efficiency. The polypeptide is 2-acylglycerol O-acyltransferase 1 (mogat1) (Xenopus laevis (African clawed frog)).